Consider the following 140-residue polypeptide: MAKKVVAVVKIQLPAGKATPAPPVGTALGPHGVNIMAFCKEFNERTAKDAGLIIPVVITIYSDRSFSFITKTPPASVLLKKAAGIESGSPQPNKQKVGKITKQQLREIAEIKMRDLNTTDIEAAMRMIAGTARSMGIEIV.

It belongs to the universal ribosomal protein uL11 family. Part of the ribosomal stalk of the 50S ribosomal subunit. Interacts with L10 and the large rRNA to form the base of the stalk. L10 forms an elongated spine to which L12 dimers bind in a sequential fashion forming a multimeric L10(L12)X complex. In terms of processing, one or more lysine residues are methylated.

Functionally, forms part of the ribosomal stalk which helps the ribosome interact with GTP-bound translation factors. The chain is Large ribosomal subunit protein uL11 from Caldanaerobacter subterraneus subsp. tengcongensis (strain DSM 15242 / JCM 11007 / NBRC 100824 / MB4) (Thermoanaerobacter tengcongensis).